We begin with the raw amino-acid sequence, 400 residues long: Autophagy-related protein 18 (400 aa).

WD repeat units follow at residues 163–203 (AHKS…KLYQ) and 208–247 (SMPS…PSED). A L/FRRG motif motif is present at residues 204-208 (FRRGS). A disordered region spans residues 241-296 (HQDPSEDLPTSPIGTDSRKTNSTPRERAFSQGSSTLSGGDNSPTDGDPSDISSRKH). Over residues 256–268 (DSRKTNSTPRERA) the composition is skewed to basic and acidic residues. Polar residues predominate over residues 270–284 (SQGSSTLSGGDNSPT). WD repeat units follow at residues 295–341 (KHNG…AWIR) and 353–393 (SNAG…GGEG).

The protein belongs to the WD repeat PROPPIN family. Component of the PI(3,5)P2 regulatory complex.

It is found in the preautophagosomal structure membrane. The protein resides in the vacuole membrane. The protein localises to the endosome membrane. In terms of biological role, the PI(3,5)P2 regulatory complex regulates both the synthesis and turnover of phosphatidylinositol 3,5-bisphosphate (PtdIns(3,5)P2). Necessary for proper vacuole morphology. Plays an important role in osmotically-induced vacuole fragmentation. Required for cytoplasm to vacuole transport (Cvt) vesicle formation, pexophagy and starvation-induced autophagy. Involved in correct ATG9 trafficking to the pre-autophagosomal structure. Might also be involved in premeiotic DNA replication. The chain is Autophagy-related protein 18 (ATG18) from Ajellomyces capsulatus (strain NAm1 / WU24) (Darling's disease fungus).